The sequence spans 438 residues: Putative galacturan 1,4-alpha-galacturonidase A (438 aa).

The N-terminal stretch at 1 to 21 is a signal peptide; it reads MRMPSAISIGVFAGLSLAASA. N28, N102, N111, and N197 each carry an N-linked (GlcNAc...) asparagine glycan. PbH1 repeat units follow at residues 186 to 222 and 223 to 244; these read SSHINLDNFYVNATNHDSSVSPEGEWVQNTDGIDTYR and SDHITITNWVYQGGDDAVAFKG. D237 (proton donor) is an active-site residue. N245, N253, N279, N325, N353, N372, and N388 each carry an N-linked (GlcNAc...) asparagine glycan. PbH1 repeat units lie at residues 246-266, 277-303, and 323-344; these read STNIHVENVTVYGGPGIAFGS, VENVTVRNVRVQPSFQRAMNSGVYFKS, and VRNVSVENLRLKDVQLPVYIDT. C397 and C403 form a disulfide bridge. N-linked (GlcNAc...) asparagine glycosylation occurs at N418.

It belongs to the glycosyl hydrolase 28 family.

Its subcellular location is the secreted. It catalyses the reaction [(1-&gt;4)-alpha-D-galacturonosyl](n) + H2O = alpha-D-galacturonate + [(1-&gt;4)-alpha-D-galacturonosyl](n-1). Functionally, specific in hydrolyzing the terminal glycosidic bond of polygalacturonic acid and oligogalacturonates. This Aspergillus niger protein is Putative galacturan 1,4-alpha-galacturonidase A (rgxA).